The chain runs to 532 residues: CTP synthase (532 aa).

Positions 1 to 267 are amidoligase domain; sequence MTKFIFVTGG…DDIVLKILGL (267 aa). Residue Ser-13 coordinates CTP. Ser-13 contacts UTP. Position 14–19 (14–19) interacts with ATP; the sequence is SLGKGI. Tyr-54 serves as a coordination point for L-glutamine. Asp-71 provides a ligand contact to ATP. Mg(2+) is bound by residues Asp-71 and Glu-141. CTP-binding positions include 148-150, 188-193, and Lys-224; these read DIE and KTKPTQ. Residues 188–193 and Lys-224 contribute to the UTP site; that span reads KTKPTQ. The 241-residue stretch at 292–532 folds into the Glutamine amidotransferase type-1 domain; sequence EIAIVGKYVE…EFVKATLANR (241 aa). Position 354 (Gly-354) interacts with L-glutamine. Cys-381 serves as the catalytic Nucleophile; for glutamine hydrolysis. L-glutamine-binding positions include 382-385, Glu-405, and Arg-462; that span reads LGMQ. Catalysis depends on residues His-507 and Glu-509.

Belongs to the CTP synthase family. Homotetramer.

It carries out the reaction UTP + L-glutamine + ATP + H2O = CTP + L-glutamate + ADP + phosphate + 2 H(+). The enzyme catalyses L-glutamine + H2O = L-glutamate + NH4(+). It catalyses the reaction UTP + NH4(+) + ATP = CTP + ADP + phosphate + 2 H(+). It participates in pyrimidine metabolism; CTP biosynthesis via de novo pathway; CTP from UDP: step 2/2. With respect to regulation, allosterically activated by GTP, when glutamine is the substrate; GTP has no effect on the reaction when ammonia is the substrate. The allosteric effector GTP functions by stabilizing the protein conformation that binds the tetrahedral intermediate(s) formed during glutamine hydrolysis. Inhibited by the product CTP, via allosteric rather than competitive inhibition. Functionally, catalyzes the ATP-dependent amination of UTP to CTP with either L-glutamine or ammonia as the source of nitrogen. Regulates intracellular CTP levels through interactions with the four ribonucleotide triphosphates. The sequence is that of CTP synthase from Desulfitobacterium hafniense (strain Y51).